The sequence spans 151 residues: Deoxyuridine 5'-triphosphate nucleotidohydrolase (151 aa).

Substrate contacts are provided by residues 70–72 (RSG), asparagine 83, 87–89 (LID), and methionine 97.

This sequence belongs to the dUTPase family. The cofactor is Mg(2+).

The enzyme catalyses dUTP + H2O = dUMP + diphosphate + H(+). The protein operates within pyrimidine metabolism; dUMP biosynthesis; dUMP from dCTP (dUTP route): step 2/2. Functionally, this enzyme is involved in nucleotide metabolism: it produces dUMP, the immediate precursor of thymidine nucleotides and it decreases the intracellular concentration of dUTP so that uracil cannot be incorporated into DNA. The polypeptide is Deoxyuridine 5'-triphosphate nucleotidohydrolase (Hamiltonella defensa subsp. Acyrthosiphon pisum (strain 5AT)).